Reading from the N-terminus, the 83-residue chain is Molybdopterin synthase sulfur carrier subunit (83 aa).

This sequence belongs to the MoaD family.

The protein operates within cofactor biosynthesis; molybdopterin biosynthesis. Functionally, involved in sulfur transfer in the conversion of molybdopterin precursor Z to molybdopterin. Probably plays a role in host phagosome maturation arrest. The chain is Molybdopterin synthase sulfur carrier subunit (moaD1) from Mycobacterium tuberculosis (strain ATCC 25618 / H37Rv).